A 228-amino-acid chain; its full sequence is UPF0173 metal-dependent hydrolase PTH_1415 (228 aa).

The protein belongs to the UPF0173 family.

The protein is UPF0173 metal-dependent hydrolase PTH_1415 of Pelotomaculum thermopropionicum (strain DSM 13744 / JCM 10971 / SI).